A 425-amino-acid polypeptide reads, in one-letter code: Cytokine receptor-like factor 1 (425 aa).

The signal sequence occupies residues 1 to 33 (MPAGRPGPVAQSARRPPRPLSSLWSPLLLCVLG). One can recognise an Ig-like C2-type domain in the interval 35-134 (PRGGSGAHTA…SILAGSCLYV (100 aa)). N-linked (GlcNAc...) asparagine glycosylation is found at asparagine 95, asparagine 107, and asparagine 143. 2 Fibronectin type-III domains span residues 140–235 (KPFN…VLDV) and 240–344 (PPPD…TPRS). Cysteines 146 and 156 form a disulfide. A glycan (N-linked (GlcNAc...) asparagine) is linked at asparagine 171. Cysteine 187 and cysteine 198 form a disulfide bridge. Serine 222 is modified (phosphoserine). A glycan (N-linked (GlcNAc...) asparagine) is linked at asparagine 295. The WSXWS motif signature appears at 330–334 (WSEWS). The segment at 335-366 (HPTAASTPRSERPGPGGGVCEPRGGEPSSGPV) is disordered. N-linked (GlcNAc...) asparagine glycosylation occurs at asparagine 385. The interval 402 to 425 (HKTRNQDEGILPSGRRGAARGPAG) is disordered. Residues 415–425 (GRRGAARGPAG) are compositionally biased toward low complexity.

The protein belongs to the type I cytokine receptor family. Type 3 subfamily. In terms of assembly, forms covalent di- and tetramers. Forms a heteromeric complex with cardiotrophin-like cytokine CLCF1/CLC; the CRLF1-CLCF1 complex is a ligand for the ciliary neurotrophic factor receptor/CNTFR. The CRLF1-CLCF1 heterodimer, as well as tripartite signaling complex formed by CRLF1, CLCF1 and CNTFR bind SORL1 (via N-terminal ectodomain); within this complex, the interaction is mediated predominantly by the CRLF1 moiety. As to expression, widely expressed in the embryo. Not detected in the brain of adult mice.

It localises to the secreted. Its function is as follows. In complex with CLCF1, forms a heterodimeric neurotropic cytokine that plays a crucial role during neuronal development. Plays a role in the initiation and/or maintenance of suckling in neonatal mice. May also play a regulatory role in the immune system. This is Cytokine receptor-like factor 1 (Crlf1) from Mus musculus (Mouse).